A 349-amino-acid polypeptide reads, in one-letter code: 4-hydroxy-3-methylbut-2-en-1-yl diphosphate synthase (flavodoxin) (349 aa).

4 residues coordinate [4Fe-4S] cluster: Cys265, Cys268, Cys300, and Glu307.

Belongs to the IspG family. The cofactor is [4Fe-4S] cluster.

It catalyses the reaction (2E)-4-hydroxy-3-methylbut-2-enyl diphosphate + oxidized [flavodoxin] + H2O + 2 H(+) = 2-C-methyl-D-erythritol 2,4-cyclic diphosphate + reduced [flavodoxin]. It participates in isoprenoid biosynthesis; isopentenyl diphosphate biosynthesis via DXP pathway; isopentenyl diphosphate from 1-deoxy-D-xylulose 5-phosphate: step 5/6. Functionally, converts 2C-methyl-D-erythritol 2,4-cyclodiphosphate (ME-2,4cPP) into 1-hydroxy-2-methyl-2-(E)-butenyl 4-diphosphate. The chain is 4-hydroxy-3-methylbut-2-en-1-yl diphosphate synthase (flavodoxin) from Thermodesulfovibrio yellowstonii (strain ATCC 51303 / DSM 11347 / YP87).